A 280-amino-acid polypeptide reads, in one-letter code: Bifunctional protein FolD (280 aa).

Residues Gly-166–Ser-168 and Ser-191 contribute to the NADP(+) site.

The protein belongs to the tetrahydrofolate dehydrogenase/cyclohydrolase family. In terms of assembly, homodimer.

It catalyses the reaction (6R)-5,10-methylene-5,6,7,8-tetrahydrofolate + NADP(+) = (6R)-5,10-methenyltetrahydrofolate + NADPH. The catalysed reaction is (6R)-5,10-methenyltetrahydrofolate + H2O = (6R)-10-formyltetrahydrofolate + H(+). It functions in the pathway one-carbon metabolism; tetrahydrofolate interconversion. Functionally, catalyzes the oxidation of 5,10-methylenetetrahydrofolate to 5,10-methenyltetrahydrofolate and then the hydrolysis of 5,10-methenyltetrahydrofolate to 10-formyltetrahydrofolate. This Cellvibrio japonicus (strain Ueda107) (Pseudomonas fluorescens subsp. cellulosa) protein is Bifunctional protein FolD.